Reading from the N-terminus, the 262-residue chain is Putative hydroxypyruvate isomerase (262 aa).

Residues Glu-146 and Glu-244 each act as proton donor/acceptor in the active site.

The protein belongs to the hyi family.

The enzyme catalyses 3-hydroxypyruvate = 2-hydroxy-3-oxopropanoate. Functionally, catalyzes the reversible isomerization between hydroxypyruvate and 2-hydroxy-3-oxopropanoate (also termed tartronate semialdehyde). The protein is Putative hydroxypyruvate isomerase of Caenorhabditis elegans.